We begin with the raw amino-acid sequence, 400 residues long: Large envelope protein (400 aa).

Disordered regions lie at residues 1 to 50 (MGGW…PHKD) and 84 to 116 (ILTSVPAAPPPASTNRQSGRQPTPLSPPLRDTH). Gly-2 is lipidated: N-myristoyl glycine; by host. The tract at residues 2-119 (GGWSSKPRKG…PPLRDTHPQA (118 aa)) is pre-S1. A pre-S region spans residues 2–174 (GGWSSKPRKG…LSTTGDPVPN (173 aa)). Residues 2-181 (GGWSSKPRKG…VPNMENIASG (180 aa)) lie on the Virion surface; in external conformation side of the membrane. Residues 2 to 253 (GGWSSKPRKG…PGYRWMCLRR (252 aa)) are Intravirion; in internal conformation-facing. Residues 96–106 (STNRQSGRQPT) show a composition bias toward polar residues. The pre-S2 stretch occupies residues 120 to 174 (VQWNSTTFHQTLQDPRVRALYLPAGGSSSGTVSPAQNTVSAISSILSTTGDPVPN). Residues 182–202 (LLGPLLVLQAGFFSLTKILTI) form a helical membrane-spanning segment. Topologically, residues 203–253 (PQSLDSWWTSLNFLGGTPVCLGQNSQSQISSHSPTCCPPICPGYRWMCLRR) are intravirion; in external conformation. The helical transmembrane segment at 254–274 (FIIFLCILLLCLIFLLVLLDY) threads the bilayer. Residues 275–348 (QGMLPVCPLI…WASVRFSWLS (74 aa)) lie on the Virion surface side of the membrane. N-linked (GlcNAc...) asparagine; by host glycosylation is present at Asn-320. Residues 349–369 (LLVPFVQWFVGLSPTVWLSVI) form a helical membrane-spanning segment. Topologically, residues 370 to 375 (WMMWFW) are intravirion. Residues 376–398 (GPSLYNILSPFMPLLPIFLCLWV) traverse the membrane as a helical segment. Residues 399 to 400 (YM) lie on the Virion surface side of the membrane.

Belongs to the orthohepadnavirus major surface antigen family. In terms of assembly, li-HBsAg interacts with capsid protein and with HDV Large delta antigen. Isoform M associates with host chaperone CANX through its pre-S2 N glycan. This association may be essential for M proper secretion. Interacts (via its myristoylated pre-S1 region) with the host SLC10A1/NTCP; this interaction is essential for viral entry. Post-translationally, isoform M is N-terminally acetylated by host at a ratio of 90%, and N-glycosylated by host at the pre-S2 region. Myristoylated; this modification is essential for its interaction with the host protein SLC10A1/NTCP.

Its subcellular location is the virion membrane. In terms of biological role, the large envelope protein exists in two topological conformations, one which is termed 'external' or Le-HBsAg and the other 'internal' or Li-HBsAg. In its external conformation the protein attaches the virus to cell receptors and thereby initiating infection. This interaction determines the species specificity and liver tropism. This attachment induces virion internalization predominantly through caveolin-mediated endocytosis. The large envelope protein also assures fusion between virion membrane and endosomal membrane. In its internal conformation the protein plays a role in virion morphogenesis and mediates the contact with the nucleocapsid like a matrix protein. Its function is as follows. The middle envelope protein plays an important role in the budding of the virion. It is involved in the induction of budding in a nucleocapsid independent way. In this process the majority of envelope proteins bud to form subviral lipoprotein particles of 22 nm of diameter that do not contain a nucleocapsid. The protein is Large envelope protein of Homo sapiens (Human).